We begin with the raw amino-acid sequence, 343 residues long: Large ribosomal subunit protein uL3 (343 aa).

Disordered stretches follow at residues 1-31 (MGHR…TPRS) and 238-262 (KGSR…PGQM).

It belongs to the universal ribosomal protein uL3 family. As to quaternary structure, part of the 50S ribosomal subunit. Forms a cluster with proteins L14 and L24e.

One of the primary rRNA binding proteins, it binds directly near the 3'-end of the 23S rRNA, where it nucleates assembly of the 50S subunit. The protein is Large ribosomal subunit protein uL3 of Sulfurisphaera tokodaii (strain DSM 16993 / JCM 10545 / NBRC 100140 / 7) (Sulfolobus tokodaii).